A 726-amino-acid polypeptide reads, in one-letter code: WD repeat and coiled-coil-containing protein (726 aa).

WD repeat units follow at residues 55 to 98 (GQFE…SDKN) and 154 to 194 (KSSG…LNAC). The interval 502 to 574 (RSYDGDQSPT…PNFIQPSDVS (73 aa)) is disordered. The span at 506–515 (GDQSPTSSAN) shows a compositional bias: polar residues. Residues 517–533 (FDEKRNRLRMESFDTEP) are compositionally biased toward basic and acidic residues. Positions 550–574 (SGSTSPKSECQNSSPPNFIQPSDVS) are enriched in polar residues. Residues 581 to 609 (SISRNVERLCCNFAHLQQHLSELTDITRN) adopt a coiled-coil conformation.

The chain is WD repeat and coiled-coil-containing protein (wdcp) from Xenopus laevis (African clawed frog).